The sequence spans 478 residues: uncharacterized protein (478 aa).

This is an uncharacterized protein from Schizosaccharomyces pombe (strain 972 / ATCC 24843) (Fission yeast).